Here is a 164-residue protein sequence, read N- to C-terminus: ATP synthase subunit b 2 (164 aa).

Residues 4–24 traverse the membrane as a helical segment; that stretch reads TFWAFVGLVLFLALLAYFKVP.

It belongs to the ATPase B chain family. As to quaternary structure, F-type ATPases have 2 components, F(1) - the catalytic core - and F(0) - the membrane proton channel. F(1) has five subunits: alpha(3), beta(3), gamma(1), delta(1), epsilon(1). F(0) has three main subunits: a(1), b(2) and c(10-14). The alpha and beta chains form an alternating ring which encloses part of the gamma chain. F(1) is attached to F(0) by a central stalk formed by the gamma and epsilon chains, while a peripheral stalk is formed by the delta and b chains.

Its subcellular location is the cell inner membrane. In terms of biological role, f(1)F(0) ATP synthase produces ATP from ADP in the presence of a proton or sodium gradient. F-type ATPases consist of two structural domains, F(1) containing the extramembraneous catalytic core and F(0) containing the membrane proton channel, linked together by a central stalk and a peripheral stalk. During catalysis, ATP synthesis in the catalytic domain of F(1) is coupled via a rotary mechanism of the central stalk subunits to proton translocation. Its function is as follows. Component of the F(0) channel, it forms part of the peripheral stalk, linking F(1) to F(0). The protein is ATP synthase subunit b 2 of Bartonella quintana (strain Toulouse) (Rochalimaea quintana).